The following is a 386-amino-acid chain: Prostacyclin receptor (386 aa).

At 1 to 16 (MADSCRNLTYVRGSVG) the chain is on the extracellular side. Intrachain disulfides connect cysteine 5-cysteine 165 and cysteine 92-cysteine 170. Asparagine 7 is a glycosylation site (N-linked (GlcNAc...) asparagine). Residues 17 to 38 (PATSTLMFVAGVVGNGLALGIL) traverse the membrane as a helical segment. Topologically, residues 39 to 51 (SARRPARPSAFAV) are cytoplasmic. A helical membrane pass occupies residues 52-76 (LVTGLAATDLLGTSFLSPAVFVAYA). Over 77–94 (RNSSLLGLARGGPALCDA) the chain is Extracellular. Residues 95–115 (FAFAMTFFGLASMLILFAMAV) traverse the membrane as a helical segment. Residues 116–134 (ERCLALSHPYLYAQLDGPR) are Cytoplasmic-facing. Residues 135–158 (CARLALPAIYAFCVLFCALPLLGL) traverse the membrane as a helical segment. Topologically, residues 159–181 (GQHQQYCPGSWCFLRMRWAQPGG) are extracellular. The helical transmembrane segment at 182–208 (AAFSLAYAGLVALLVAAIFLCNGSVTL) threads the bilayer. Topologically, residues 209–235 (SLCRMYRQQKRHQGSLGPRPRTGEDEV) are cytoplasmic. The chain crosses the membrane as a helical span at residues 236 to 260 (DHLILLALMTVVMAVCSLPLTIRCF). The Extracellular portion of the chain corresponds to 261 to 274 (TQAVAPDSSSEMGD). A helical transmembrane segment spans residues 275-295 (LLAFRFYAFNPILDPWVFILF). The Cytoplasmic portion of the chain corresponds to 296-386 (RKAVFQRLKL…AEASVACSLC (91 aa)). The disordered stretch occupies residues 322–376 (PLSQLASGRRDPRAPSAPVGKEGSCVPLSAWGEGQVEPLPPTQQSSGSAVGTSSK). Polar residues predominate over residues 363 to 376 (TQQSSGSAVGTSSK). A Cysteine methyl ester modification is found at cysteine 383. A lipid anchor (S-farnesyl cysteine) is attached at cysteine 383. A propeptide spans 384-386 (SLC) (removed in mature form).

The protein belongs to the G-protein coupled receptor 1 family. As to quaternary structure, interacts (non-isoprenylated C-terminus) with PDZK1. Post-translationally, isoprenylation does not influence ligand binding but is required for efficient coupling to the effectors adenylyl cyclase and phospholipase C.

The protein resides in the cell membrane. Receptor for prostacyclin (prostaglandin I2 or PGI2). The activity of this receptor is mediated by G(s) proteins which activate adenylate cyclase. The sequence is that of Prostacyclin receptor (PTGIR) from Homo sapiens (Human).